The sequence spans 169 residues: Succinate dehydrogenase cytochrome b560 subunit, mitochondrial (169 aa).

Residues 1-29 constitute a mitochondrion transit peptide; sequence MAAFLLRHVSRHCLRAHLNAQLCIRNAAP. Topologically, residues 30–62 are mitochondrial matrix; sequence LGTTAKEEMERFWKKNTSSNRPLSPHLTIYKWS. A helical membrane pass occupies residues 63–92; sequence LPMALSVCHRGSGIALSGGVSLFGLSALLL. Over 93–112 the chain is Mitochondrial intermembrane; sequence PGNFESYLMFVKSLCLGPTL. The helical transmembrane segment at 113–137 threads the bilayer; sequence IYSAKFVLVFPLMYHSLNGIRHLLW. H127 is a heme b binding site. At 138–144 the chain is on the mitochondrial matrix side; the sequence is DLGKGLA. The chain crosses the membrane as a helical span at residues 145-166; that stretch reads IPQVWLSGVAVVVLAVLSSGGL. Over 167–169 the chain is Mitochondrial intermembrane; the sequence is AAL.

The protein belongs to the cytochrome b560 family. In terms of assembly, component of complex II composed of four subunits: the flavoprotein (FP) SDHA, iron-sulfur protein (IP) SDHB, and a cytochrome b560 composed of SDHC and SDHD. Heme b is required as a cofactor.

Its subcellular location is the mitochondrion inner membrane. The protein operates within carbohydrate metabolism; tricarboxylic acid cycle. In terms of biological role, membrane-anchoring subunit of succinate dehydrogenase (SDH) that is involved in complex II of the mitochondrial electron transport chain and is responsible for transferring electrons from succinate to ubiquinone (coenzyme Q). SDH also oxidizes malate to the non-canonical enol form of oxaloacetate, enol-oxaloacetate. Enol-oxaloacetate, which is a potent inhibitor of the succinate dehydrogenase activity, is further isomerized into keto-oxaloacetate. The protein is Succinate dehydrogenase cytochrome b560 subunit, mitochondrial (Sdhc) of Mus musculus (Mouse).